The following is a 227-amino-acid chain: Thiocyanate methyltransferase 1 (227 aa).

4 residues coordinate S-adenosyl-L-methionine: Trp36, Trp40, Trp47, and Gly74. Ser86 carries the phosphoserine modification. S-adenosyl-L-methionine is bound by residues Asp95, 123-124 (DV), and Tyr139.

This sequence belongs to the class I-like SAM-binding methyltransferase superfamily. TPMT family. In terms of tissue distribution, expressed in shoots, leaves, stems, inflorescences, flowers and green siliques.

The enzyme catalyses thiocyanate + S-adenosyl-L-methionine = methyl thiocyanate + S-adenosyl-L-homocysteine. Its function is as follows. S-adenosyl-L-methionine-dependent methyltransferase. Involved in glucosinolate metabolism and defense against phytopathogens. Highly reactive to thiocyanate (NCS(-)) derived from myrosinase-mediated hydrolysis of glucosinolates upon tissue damage. The sequence is that of Thiocyanate methyltransferase 1 from Arabidopsis thaliana (Mouse-ear cress).